A 681-amino-acid polypeptide reads, in one-letter code: DNA ligase (681 aa).

NAD(+) contacts are provided by residues 45 to 49 (DFDFD), 94 to 95 (SL), and Glu-120. Lys-122 (N6-AMP-lysine intermediate) is an active-site residue. The NAD(+) site is built by Arg-143, Glu-177, Lys-289, and Lys-313. Residues Cys-403, Cys-406, Cys-421, and Cys-426 each coordinate Zn(2+). The 89-residue stretch at 593–681 (SDQQPFAGQS…SLKINFKNTI (89 aa)) folds into the BRCT domain.

It belongs to the NAD-dependent DNA ligase family. LigA subfamily. The cofactor is Mg(2+). Mn(2+) serves as cofactor.

It carries out the reaction NAD(+) + (deoxyribonucleotide)n-3'-hydroxyl + 5'-phospho-(deoxyribonucleotide)m = (deoxyribonucleotide)n+m + AMP + beta-nicotinamide D-nucleotide.. In terms of biological role, DNA ligase that catalyzes the formation of phosphodiester linkages between 5'-phosphoryl and 3'-hydroxyl groups in double-stranded DNA using NAD as a coenzyme and as the energy source for the reaction. It is essential for DNA replication and repair of damaged DNA. The chain is DNA ligase from Leptospira borgpetersenii serovar Hardjo-bovis (strain L550).